The sequence spans 464 residues: MNLRPVIVGGGSAGMAAAIELARRGVPCVLFDEASRPGGVVYRGPLRAGVDPAYLGARYTRMLEKLRRDFSACAGHIDLRLNSRVVGGDGQRLMVLDEAERLHEVEYSHLLLATGCHERSVPFPGWTLPGVMLLGGLQLQIKSGVVKPLGDTLIAGSGPLLPLVACQLHAAGVRVAGVYEACAFGRMARESLALLNKPQLFLDGLSMLGYLKLNGIPLHYGWGVVEASGDGELTEVTVAPYDEEWRPDLENARPVKASTLAVGYGFIPRTQLSQQLGLEHGFSDDGYLRAECNVWQQSSQPHIHLAGDMAGIRGGEAAMIGGRIAALSILLQREAIAPAEAIERRESHLARLEAIKRFRAGVERYTQRGARQVELARADTVICRCEQVTRGDIERALEQGVQDIAGLKMRTRAGMGDCQGRMCIGYCSDRLRRATGRHDVGWLRPRFPIDPIPFSAFQNLGTEA.

Heterotrimer of HcnA, HcnB and HcnC.

The protein resides in the cell membrane. It catalyses the reaction glycine + 2 A = hydrogen cyanide + 2 AH2 + CO2. Its activity is regulated as follows. Oxygen is necessary for cyanogenesis. Activated by succinate, glycine methyl ester, glucose and D,L-methionine in addition to glycine. Phenazine methosulfate, methylene blue, 2,6-dichlorophenolindophenol (DCIP) and ferricyanide can replace oxygen for the reaction. Inhibited by pyrrolnitrin and acriflavine at 1 mM concentration. Functionally, a three-component membrane-bound flavoenzyme that catalyzes the formation of hydrogen cyanide, a secondary metabolite, by transfer of electrons to a cyanide-resistant branch of the aerobic respiratory chain. The protein is Hydrogen cyanide synthase subunit HcnB of Pseudomonas aeruginosa (strain ATCC 15692 / DSM 22644 / CIP 104116 / JCM 14847 / LMG 12228 / 1C / PRS 101 / PAO1).